The sequence spans 763 residues: Forkhead box protein M1 (763 aa).

The interval 1–53 (MKTSPRRPLILKRRRLPLPVQNAPSETSEEEPKRSPAQQESNQAEASKEVAES) is disordered. Positions 36–45 (PAQQESNQAE) are enriched in polar residues. Residues lysine 163, lysine 201, and lysine 325 each participate in a glycyl lysine isopeptide (Lys-Gly) (interchain with G-Cter in SUMO2) cross-link. A disordered region spans residues 198-232 (RSIKQEMEEKENCHLEQRQVKVEEPSRPSASWQNS). Over residues 200-223 (IKQEMEEKENCHLEQRQVKVEEPS) the composition is skewed to basic and acidic residues. The segment at residues 235–327 (ERPPYSYMAM…LTLDQVFKPL (93 aa)) is a DNA-binding region (fork-head). The disordered stretch occupies residues 329 to 351 (PGSPQLPEHLESQQKRPNPELRR). Residue serine 331 is modified to Phosphoserine. Over residues 336 to 351 (EHLESQQKRPNPELRR) the composition is skewed to basic and acidic residues. Lysine 356 participates in a covalent cross-link: Glycyl lysine isopeptide (Lys-Gly) (interchain with G-Cter in SUMO2). Serine 376 is subject to Phosphoserine; by CHEK2. Glycyl lysine isopeptide (Lys-Gly) (interchain with G-Cter in SUMO2) cross-links involve residues lysine 422 and lysine 440. A disordered region spans residues 482–711 (PPLEEWPSPA…PGSPEPQVSG (230 aa)). The residue at position 489 (serine 489) is a Phosphoserine; by GSK3. Residues 494–503 (FKEESSHSWE) show a composition bias toward basic and acidic residues. Position 522 is a phosphoserine (serine 522). The span at 583–592 (DPASQLSYSQ) shows a compositional bias: polar residues. Threonine 611 bears the Phosphothreonine; by CDK1 mark. A phosphothreonine mark is found at threonine 620, threonine 627, and threonine 662. Serine 693 carries the post-translational modification Phosphoserine; by CDK1. 2 positions are modified to phosphoserine; by PLK1: serine 730 and serine 739.

In terms of assembly, interacts with PINT87aa which is encoded by the circular form of the long non-coding RNA LINC-PINT; the interaction inhibits FOXM1-mediated transcription of PHB2. Phosphorylated in M (mitotic) phase. Phosphorylation by the checkpoint kinase CHEK2 in response to DNA damage increases the FOXM1 protein stability probably stimulating the transcription of genes involved in DNA repair. Phosphorylated by CDK1 in late S and G2 phases, creating docking sites for the POLO box domains of PLK1. Subsequently, PLK1 binds and phosphorylates FOXM1, leading to activation of transcriptional activity and subsequent enhanced expression of key mitotic regulators. Phosphorylated by GSK3B leading to ubiquitination and proteasomal degradation. In terms of processing, ubiquitinated in a FBXW7-dependent manner leading to proteasomal degradation. Expressed in thymus, testis, small intestine, colon followed by ovary. Appears to be expressed only in adult organs containing proliferating/cycling cells or in response to growth factors. Also expressed in epithelial cell lines derived from tumors. Not expressed in resting cells. Isoform 2 is highly expressed in testis.

It is found in the nucleus. Functionally, transcription factor regulating the expression of cell cycle genes essential for DNA replication and mitosis. Plays a role in the control of cell proliferation. Also plays a role in DNA break repair, participating in the DNA damage checkpoint response. Promotes transcription of PHB2. The polypeptide is Forkhead box protein M1 (FOXM1) (Homo sapiens (Human)).